Consider the following 258-residue polypeptide: MIPLQKDNQEEGVCPICQESLKEAVSTNCGHLFCRVCLTQHVEKASASGVFCCPLCRKPCSEEVLGTGYICPNHQKRVCRFCEESRLLLCVECLVSPEHMSHHELTIENALSHYKERLNRRSRKLRKDIAELQRLKAQQEKKLQALQFQVDHGNHRLEAGPESQHQTREQLGALPQQWLGQLEHMPAEAARILDISRAVTQLRSLVIDLERTAKELDTNTLKNAGDLLNRSAPQKLEVIYPQLEKGVSELLLQPPQKL.

Residues 14–56 form an RING-type zinc finger; the sequence is CPICQESLKEAVSTNCGHLFCRVCLTQHVEKASASGVFCCPLC. Residues 66 to 107 form a B box-type zinc finger; it reads GTGYICPNHQKRVCRFCEESRLLLCVECLVSPEHMSHHELTI. The Zn(2+) site is built by Cys71, His74, Cys93, and His99. The stretch at 107–159 forms a coiled coil; that stretch reads IENALSHYKERLNRRSRKLRKDIAELQRLKAQQEKKLQALQFQVDHGNHRLEA.

The protein belongs to the TRIM/RBCC family. In terms of assembly, interacts with NEDD8. As to expression, highly expressed in normal gastrointestinal epithelia but that is down-regulated in gastrointestinal carcinomas and chronic inflammatory lesions of the gastrointestinal tract.

The catalysed reaction is S-ubiquitinyl-[E2 ubiquitin-conjugating enzyme]-L-cysteine + [acceptor protein]-L-lysine = [E2 ubiquitin-conjugating enzyme]-L-cysteine + N(6)-ubiquitinyl-[acceptor protein]-L-lysine.. In terms of biological role, E3 ubiquitin-protein ligase that plays a role in the limitation of the innate immune response. Mediates inhibition of the RLR signaling pathway by ubiquitinating RIGI and IFIH1 receptors, leading to their proteasomal degradation. Also promotes the neddylation of IKBKG/NEMO, stabilizing NFKBIA, and thereby inhibiting of NF-kappa-B nuclear translocation and activation. The polypeptide is E3 ubiquitin ligase TRIM40 (TRIM40) (Homo sapiens (Human)).